Consider the following 258-residue polypeptide: TLC domain-containing protein 4 A (258 aa).

The next 7 helical transmembrane spans lie at 8–28 (YLISVEPLGFILYYTSLYIWI), 49–71 (IEWTNKIVATISSIVSFSLSCYC), 92–112 (FILKFISFYFLFDALHLIIYY), 118–138 (WPIIIHHLVVGILSYVYIGLY), 144–164 (LTLLYFLLFEITNPFIHMKWF), 170–190 (LENHILYSINGFMMAFFFIFI), and 217–237 (IIFFCFPIITILNLFWTYLVI). A TLC domain is found at 46–245 (SSKIEWTNKI…VIKGILKHLS (200 aa)).

The protein belongs to the TLCD4 family.

The protein localises to the membrane. This is TLC domain-containing protein 4 A (tlcd4a) from Dictyostelium discoideum (Social amoeba).